A 254-amino-acid polypeptide reads, in one-letter code: UPF0246 protein CPE2152 (254 aa).

The protein belongs to the UPF0246 family.

The chain is UPF0246 protein CPE2152 from Clostridium perfringens (strain 13 / Type A).